An 80-amino-acid chain; its full sequence is uncharacterized protein (80 aa).

This is an uncharacterized protein from Shigella flexneri.